Consider the following 192-residue polypeptide: dTTP/UTP pyrophosphatase (192 aa).

The active-site Proton acceptor is the Asp-72.

Belongs to the Maf family. YhdE subfamily. It depends on a divalent metal cation as a cofactor.

The protein resides in the cytoplasm. The catalysed reaction is dTTP + H2O = dTMP + diphosphate + H(+). It carries out the reaction UTP + H2O = UMP + diphosphate + H(+). Nucleoside triphosphate pyrophosphatase that hydrolyzes dTTP and UTP. May have a dual role in cell division arrest and in preventing the incorporation of modified nucleotides into cellular nucleic acids. The protein is dTTP/UTP pyrophosphatase of Hydrogenovibrio crunogenus (strain DSM 25203 / XCL-2) (Thiomicrospira crunogena).